The following is an 853-amino-acid chain: Stachyose synthase (853 aa).

Positions 1-11 (MAPPLNSTTSN) are excised as a propeptide.

The protein belongs to the glycosyl hydrolases 36 family.

The protein localises to the cytoplasm. It catalyses the reaction alpha-D-galactosyl-(1-&gt;3)-1D-myo-inositol + raffinose = stachyose + myo-inositol. It functions in the pathway glycan metabolism; stachyose biosynthesis; stachyose from raffinose: step 1/1. Functionally, catalyzes stachyose synthesis by transfer of a galactosyl moiety from galactinol to raffinose. Also catalyzes verbascose synthesis by galactosyl transfer from galactinol to stachyose or from one stachyose molecule to another. Oligosaccharides of the raffinose family play a protective role in maturation drying of seeds. They may act as cryoprotectants in frost-hardy plants. In Pisum sativum (Garden pea), this protein is Stachyose synthase (STS1).